Consider the following 192-residue polypeptide: UPF0149 protein VIBHAR_03551 (192 aa).

The protein belongs to the UPF0149 family.

The sequence is that of UPF0149 protein VIBHAR_03551 from Vibrio campbellii (strain ATCC BAA-1116).